The primary structure comprises 405 residues: Polyketide biosynthesis cytochrome P450 PksS (405 aa).

The helical transmembrane segment at 231 to 251 (LYSMLFLLVVAGLETTVNLLG) threads the bilayer. C352 provides a ligand contact to heme.

Belongs to the cytochrome P450 family.

It localises to the cell membrane. Its pathway is antibiotic biosynthesis; bacillaene biosynthesis. In terms of biological role, involved in the metabolism of the antibiotic polyketide bacillaene which is involved in secondary metabolism. The substrate is dihydrobacillaene. The chain is Polyketide biosynthesis cytochrome P450 PksS (pksS) from Bacillus subtilis (strain 168).